Consider the following 820-residue polypeptide: MDTASIRGLSWSTLDPASYNSRKRSFEQMLLQQDSNESSRRTSPSRTHSRVDLERHSSHIVSLSSSNGSPSLEDPENRLYESPASARQYYGDESLILVGFPSAGKKTLGLIASAALRREFVDFDTVFVGKTGLSPREYIEAHGATAYRSVEDELTSEVFRSRQKGCVLVGFFAMASNRQRRLLKSLSTTNPIIHIQRDLGNMIHRGDSDKDRLYRTYQLSEKMHRRFANFEFFNIFQPMADDKPLGPLRLKATEREFVRFLNGIFPQSEASRGLKNLCSSSYTYALQAPSSWLDDPQADYTELDSGADAVEILVEMSPQNQQDLFFKLSQRVAVLRKYCRVPIILDLETSATMNYIAQVNLLELVIRQAPDVIMVSLDMSPHLVKQLSLAKGHSKIIGKYHQKGPISENWDLTNLQTVIDKASLLHCSAIRLTGEAYETNNNFGCVRVVLEARKLSDLPVSCYNTGEYGRSSICLNPILSPVVLPSQSTKQGITLADAQRGLFSSFWRTKKNFTVFGQNVSYSLTPAMHNAACIACGMPHTCDYVESDRLARIREVFERESQGGLAIVYPYKTEVVQMMDEMSLDAKVIGAVNTVVIERISTNEGSPKLYLKGYNTDHIGIRTCIEKNLSPANAIRSQTSALIIGAGGMARAAIYACIKAGVRNICIFNRTEANARRLADYFATVYTNLRLTILTDLSTPWPTDLWHPTIIVSCIPAHKVGDNDAPDFLIPEQWLGSSTGGVFVEFAYKPLVTRLIRFMQSRRSQGWIVADGLDVLVEQGIAQFEILTDRPAPSHIMRRTVREQYSIAQNAHSDHETTET.

The interval 25–79 (SFEQMLLQQDSNESSRRTSPSRTHSRVDLERHSSHIVSLSSSNGSPSLEDPENRL) is disordered. Residues 59-71 (HIVSLSSSNGSPS) are compositionally biased toward low complexity.

The protein in the N-terminal section; belongs to the shikimate kinase family. It in the 2nd section; belongs to the type-I 3-dehydroquinase family. In the C-terminal section; belongs to the shikimate dehydrogenase family. Interacts with qutA; transcriptional activator of the quinate utilization pathway genes.

Multi-domain repressor protein that negatively regulates transcription of the quinate utilization pathway genes. May mediate its repressor activity by binding directly to the qutA activator protein. This chain is Quinate repressor protein (qutR), found in Talaromyces stipitatus (strain ATCC 10500 / CBS 375.48 / QM 6759 / NRRL 1006) (Penicillium stipitatum).